Reading from the N-terminus, the 133-residue chain is MDRQRSRKGSTHALMAHDQAPASGGCVSKHLAQTWPLPGNGVKVQVLFTQKGLVSWRESESLLRLNTCIQRHQRRITTLCKRGSKTQKTHNSLTYFPINRPVNRKFSKTFFDFLYDVFLWQGPITSNDITHKI.

This is an uncharacterized protein from Homo sapiens (Human).